We begin with the raw amino-acid sequence, 417 residues long: SNF1 protein kinase subunit beta-3 (417 aa).

Residues 1 to 12 show a composition bias toward basic and acidic residues; the sequence is MAGDNPENKDAS. The interval 1 to 37 is disordered; sequence MAGDNPENKDASMLDVSDAASNTTINGKHSADSTNEA. Phosphoserine occurs at positions 12, 21, 44, and 135. Over residues 19–37 the composition is skewed to polar residues; that stretch reads AASNTTINGKHSADSTNEA. Disordered stretches follow at residues 64–155 and 250–269; these read SSLI…VEGK and GNEP…DDSK. A compositionally biased stretch (polar residues) spans 118 to 136; sequence TGNTLQKMDYQPSQQPDSL. Residues 137-149 show a composition bias toward low complexity; that stretch reads QNQGFQQQQEQQQ. The kinase-interacting sequence (KIS); required for interaction with SNF1 stretch occupies residues 152-342; the sequence is VEGKKGRAMM…DQQQNNHQNM (191 aa). The span at 257–269 shows a compositional bias: basic and acidic residues; sequence LAEKKANHVDDSK. Ser-276 and Ser-279 each carry phosphoserine. Residues 343–417 form an association with SNF1 kinase complex (ASC) domain; required for interaction with SNF4 region; it reads AWLTPPQLPP…VTQILYTPLQ (75 aa).

This sequence belongs to the 5'-AMP-activated protein kinase beta subunit family. As to quaternary structure, component of the SNF1 kinase complex, a heterotrimeric complex composed of the catalytic alpha subunit SNF1, one of the three related beta subunits SIP1, SIP2 or GAL83, and the regulatory gamma subunit SNF4. The beta subunit serves as a bridge between the catalytic and the regulatory subunit. Interacts (via KIS domain) with SNF1. Interacts (via ASC domain) with SNF4. Interacts with REE1. In terms of processing, phosphorylated by SNF1 in vitro.

The protein localises to the cytoplasm. It localises to the nucleus. In terms of biological role, beta subunit of the SNF1 kinase complex, which is required for transcriptional, metabolic, and developmental adaptations in response to glucose limitation. Has a structural role, mediating heterotrimer formation, and a regulatory role, defining carbon source-regulated subcellular location and substrate specificity of the SNF1 kinase complex. Promotes the relocalization of the SNF1 kinase complex to the nucleus upon shift to nonfermentable carbon sources. In Saccharomyces cerevisiae (strain ATCC 204508 / S288c) (Baker's yeast), this protein is SNF1 protein kinase subunit beta-3 (GAL83).